Consider the following 500-residue polypeptide: Lysine--tRNA ligase (500 aa).

Positions 410 and 417 each coordinate Mg(2+).

It belongs to the class-II aminoacyl-tRNA synthetase family. Homodimer. Requires Mg(2+) as cofactor.

Its subcellular location is the cytoplasm. It carries out the reaction tRNA(Lys) + L-lysine + ATP = L-lysyl-tRNA(Lys) + AMP + diphosphate. The chain is Lysine--tRNA ligase from Shewanella denitrificans (strain OS217 / ATCC BAA-1090 / DSM 15013).